The chain runs to 217 residues: Cytidylate kinase (217 aa).

10–18 is an ATP binding site; sequence GPAGAGKST.

It belongs to the cytidylate kinase family. Type 1 subfamily.

It is found in the cytoplasm. The enzyme catalyses CMP + ATP = CDP + ADP. It carries out the reaction dCMP + ATP = dCDP + ADP. The polypeptide is Cytidylate kinase (Clostridium botulinum (strain Okra / Type B1)).